The chain runs to 345 residues: Phosphoribosylformylglycinamidine cyclo-ligase (345 aa).

It belongs to the AIR synthase family.

The protein localises to the cytoplasm. It catalyses the reaction 2-formamido-N(1)-(5-O-phospho-beta-D-ribosyl)acetamidine + ATP = 5-amino-1-(5-phospho-beta-D-ribosyl)imidazole + ADP + phosphate + H(+). Its pathway is purine metabolism; IMP biosynthesis via de novo pathway; 5-amino-1-(5-phospho-D-ribosyl)imidazole from N(2)-formyl-N(1)-(5-phospho-D-ribosyl)glycinamide: step 2/2. This is Phosphoribosylformylglycinamidine cyclo-ligase from Shewanella loihica (strain ATCC BAA-1088 / PV-4).